A 154-amino-acid polypeptide reads, in one-letter code: MGLSDEEWKKVVDIWGKVEPDLPSHGQEVIIRMFQNHPETQDRFAKFKNLKTLDEMKNSEDLKKHGTTVLTALGRILKQKGHHEAEIAPLAQTHANTHKIPIKYLEFICEVIVGVIAEKHSADFGADSQEAMRKALELFRNDMASRYKELGFQG.

The 147-residue stretch at 2–148 (GLSDEEWKKV…FRNDMASRYK (147 aa)) folds into the Globin domain. Histidine 65 contributes to the nitrite binding site. An O2-binding site is contributed by histidine 65. Histidine 94 is a heme b binding site.

It belongs to the globin family. Monomeric.

The protein localises to the cytoplasm. It localises to the sarcoplasm. The catalysed reaction is Fe(III)-heme b-[protein] + nitric oxide + H2O = Fe(II)-heme b-[protein] + nitrite + 2 H(+). It carries out the reaction H2O2 + AH2 = A + 2 H2O. Functionally, monomeric heme protein which primary function is to store oxygen and facilitate its diffusion within muscle tissues. Reversibly binds oxygen through a pentacoordinated heme iron and enables its timely and efficient release as needed during periods of heightened demand. Depending on the oxidative conditions of tissues and cells, and in addition to its ability to bind oxygen, it also has a nitrite reductase activity whereby it regulates the production of bioactive nitric oxide. Under stress conditions, like hypoxia and anoxia, it also protects cells against reactive oxygen species thanks to its pseudoperoxidase activity. This Varanus varius (Lace monitor lizard) protein is Myoglobin (MB).